The chain runs to 281 residues: Nucleoid occlusion protein (281 aa).

The disordered stretch occupies residues Met-1 to Glu-24. The H-T-H motif DNA-binding region spans Glu-145–Leu-164.

It belongs to the ParB family.

The protein resides in the cytoplasm. It is found in the nucleoid. Its function is as follows. Effects nucleoid occlusion by binding relatively nonspecifically to DNA and preventing the assembly of the division machinery in the vicinity of the nucleoid, especially under conditions that disturb the cell cycle. It helps to coordinate cell division and chromosome segregation by preventing the formation of the Z ring through the nucleoid, which would cause chromosome breakage. This Geobacillus kaustophilus (strain HTA426) protein is Nucleoid occlusion protein.